Consider the following 536-residue polypeptide: MQNGKRRIGVRISSNLSNHSGTNLSTSAQSDSSNIVKATECPICGLELPNLSALNDHLDVTHFNDNEKIHKRQDSINSWLTRTLNGASALQMKAAQRLWRMEPYEQNGDSSGAVGLEATKLTDSLVVKNHWQPEVPDMVCHDPMCDKLLNFINGHIHCRKCGYIFCNFHSMYQIKLSIHATYDSENGFWCRVCRECYEGRPGYNDSNGLIRSRFQTFETFRKPLADKRRIEFLRLSKRMKKLEELWTSENVSMLDALLLNKAKRLEQSIVHWQDDSVVQICPECNNSFTLTRRRRHCRLCGRVICRFCVLEISLPQHPQPLLICMSCNQNYFRNVLYQTERSKSLGYIRHIEHLQVFRQAMVNYYRLYEDSLSELLSGEIITEATLKIVKDRRKKFLELCVKYDGTMKKIANHPSSNDAEEQFKQNVVNEAKRYLQETILRLQAIPYHLQVGQAWTSESERELEKKKEQVEKKQEELMQTRIVLEEQVFLVENMIEDAKAKRKFSEVETLLSSLAPLHEEIHSITEKIHDLDLFDI.

A disordered region spans residues 1–31; sequence MQNGKRRIGVRISSNLSNHSGTNLSTSAQSD. Positions 12–31 are enriched in polar residues; it reads ISSNLSNHSGTNLSTSAQSD. The C2H2-type zinc finger occupies 39–62; the sequence is TECPICGLELPNLSALNDHLDVTH. The FYVE-type 1; degenerate zinc-finger motif lies at 136–201; that stretch reads PDMVCHDPMC…VCRECYEGRP (66 aa). Zn(2+)-binding residues include Cys158, Cys161, Cys193, Cys196, Cys281, Cys284, Cys297, Cys300, Cys305, Cys308, Cys324, and Cys327. The segment at 275-332 adopts an FYVE-type 2 zinc-finger fold; it reads DSVVQICPECNNSFTLTRRRRHCRLCGRVICRFCVLEISLPQHPQPLLICMSCNQNYF.

Its function is as follows. Required for vacuole segregation and vacuole protein sorting. Possibly part of a complex which tethers the vacuole membrane to microtubules, either directly or via kinesin or dynein-like motor proteins. Probably functions in several interorganelle traffic pathways. This Schizosaccharomyces pombe (strain 972 / ATCC 24843) (Fission yeast) protein is Vacuolar segregation protein pep7 (pep7).